Here is a 78-residue protein sequence, read N- to C-terminus: Large ribosomal subunit protein bL28 (78 aa).

The tract at residues 1-20 (MSRVCQVTGKRPAVGNNRSH) is disordered.

Belongs to the bacterial ribosomal protein bL28 family.

The protein is Large ribosomal subunit protein bL28 of Actinobacillus succinogenes (strain ATCC 55618 / DSM 22257 / CCUG 43843 / 130Z).